Here is a 480-residue protein sequence, read N- to C-terminus: Plant UBX domain-containing protein 10 (480 aa).

Disordered stretches follow at residues aspartate 47–isoleucine 78 and alanine 335–valine 383. Positions arginine 330–lysine 389 form a coiled coil. Residues aspartate 336–valine 383 show a composition bias toward basic and acidic residues. Positions lysine 399 to isoleucine 477 constitute a UBX domain.

The protein is Plant UBX domain-containing protein 10 of Arabidopsis thaliana (Mouse-ear cress).